A 535-amino-acid chain; its full sequence is Arginine-containing cyclodipeptide synthase anoA (535 aa).

A disordered region spans residues 93-114; that stretch reads LLSPPREPGPIDSETKTREKKS. Residues 105-114 are compositionally biased toward basic and acidic residues; the sequence is SETKTREKKS. Positions 424 to 428 match the Conserved DDXXE motif motif; it reads DDIAE.

Belongs to the arginine-containing cyclodipeptide synthase family.

It carries out the reaction L-tryptophyl-tRNA(Trp) + L-arginyl-tRNA(Arg) = cyclo(L-arginyl-L-tryptophyl) + tRNA(Trp) + tRNA(Arg) + H(+). Its pathway is secondary metabolite biosynthesis. Its function is as follows. Arginine-containing cyclodipeptide synthase; part of the cluster that mediates the biosynthesis of a highly modified cyclo-arginine-tryptophan dipeptide (cRW). Within the pathway, AnoA acts as the scaffold-generating enzyme and is responsible for formation of the cyclo-Arg-Trp diketopiperazine (cRW) from L-arginyl-tRNA(Arg) + L-tryptophanyl-tRNA(Trp). Additional enzymes from the cluster then further modify the cyclo-Arg-Asp diketopiperazine (cRW) scaffold. This Aspergillus nomiae (Aspergillus nomius) protein is Arginine-containing cyclodipeptide synthase anoA.